The sequence spans 637 residues: 3D-(3,5/4)-trihydroxycyclohexane-1,2-dione hydrolase (637 aa).

Residue E66 participates in thiamine diphosphate binding. Residues 442 to 522 (SLPGDLQRLW…INVLLFDNSG (81 aa)) are thiamine pyrophosphate binding. Residues D493 and N520 each contribute to the Mg(2+) site.

This sequence belongs to the TPP enzyme family. Mg(2+) serves as cofactor. It depends on thiamine diphosphate as a cofactor.

The catalysed reaction is 3D-3,5/4-trihydroxycyclohexane-1,2-dione + H2O = 5-deoxy-D-glucuronate + H(+). Its pathway is polyol metabolism; myo-inositol degradation into acetyl-CoA; acetyl-CoA from myo-inositol: step 3/7. Involved in the cleavage of the C1-C2 bond of 3D-(3,5/4)-trihydroxycyclohexane-1,2-dione (THcHDO) to yield 5-deoxy-glucuronate (5DG). The chain is 3D-(3,5/4)-trihydroxycyclohexane-1,2-dione hydrolase from Bacillus licheniformis (strain ATCC 14580 / DSM 13 / JCM 2505 / CCUG 7422 / NBRC 12200 / NCIMB 9375 / NCTC 10341 / NRRL NRS-1264 / Gibson 46).